The chain runs to 254 residues: Fructose-1,6-bisphosphatase (254 aa).

Mg(2+) is bound by residues Glu68, Asp84, Leu86, and Asp87. Substrate contacts are provided by residues Asp87–Ser89, Arg171, Ile176, and Arg195. Position 202 (Asp202) interacts with Mg(2+).

Belongs to the inositol monophosphatase superfamily. FBPase class 4 family. Homodimer. Requires Mg(2+) as cofactor.

It carries out the reaction beta-D-fructose 1,6-bisphosphate + H2O = beta-D-fructose 6-phosphate + phosphate. With respect to regulation, inhibited by Li(+), ADP, ATP and glucose-6-phosphate. Functionally, catalyzes the conversion of D-fructose 1,6-bisphosphate to D-fructose 6-phosphate. In vitro, also has weak activity with inositol-1-phosphate, glucose-1-phosphate and glycerol-2-phosphate. The protein is Fructose-1,6-bisphosphatase of Pyrococcus furiosus (strain ATCC 43587 / DSM 3638 / JCM 8422 / Vc1).